The chain runs to 251 residues: Pyridoxine 5'-phosphate synthase (251 aa).

The 3-amino-2-oxopropyl phosphate site is built by Asn8 and Arg19. The active-site Proton acceptor is the His44. 2 residues coordinate 1-deoxy-D-xylulose 5-phosphate: Arg46 and His51. Glu76 functions as the Proton acceptor in the catalytic mechanism. Thr106 is a binding site for 1-deoxy-D-xylulose 5-phosphate. His200 (proton donor) is an active-site residue. Residues Asp201 and Gly223–His224 contribute to the 3-amino-2-oxopropyl phosphate site.

The protein belongs to the PNP synthase family. As to quaternary structure, homooctamer; tetramer of dimers.

The protein localises to the cytoplasm. The enzyme catalyses 3-amino-2-oxopropyl phosphate + 1-deoxy-D-xylulose 5-phosphate = pyridoxine 5'-phosphate + phosphate + 2 H2O + H(+). Its pathway is cofactor biosynthesis; pyridoxine 5'-phosphate biosynthesis; pyridoxine 5'-phosphate from D-erythrose 4-phosphate: step 5/5. Its function is as follows. Catalyzes the complicated ring closure reaction between the two acyclic compounds 1-deoxy-D-xylulose-5-phosphate (DXP) and 3-amino-2-oxopropyl phosphate (1-amino-acetone-3-phosphate or AAP) to form pyridoxine 5'-phosphate (PNP) and inorganic phosphate. This Agrobacterium fabrum (strain C58 / ATCC 33970) (Agrobacterium tumefaciens (strain C58)) protein is Pyridoxine 5'-phosphate synthase.